The chain runs to 214 residues: Large ribosomal subunit protein uL16 (214 aa).

The residue at position 32 (Arg32) is a Citrulline. Residue Lys175 forms a Glycyl lysine isopeptide (Lys-Gly) (interchain with G-Cter in SUMO2) linkage. Lys188 is covalently cross-linked (Glycyl lysine isopeptide (Lys-Gly) (interchain with G-Cter in ubiquitin)).

The protein belongs to the universal ribosomal protein uL16 family. As to quaternary structure, component of the large ribosomal subunit. Mature ribosomes consist of a small (40S) and a large (60S) subunit. The 40S subunit contains about 33 different proteins and 1 molecule of RNA (18S). The 60S subunit contains about 49 different proteins and 3 molecules of RNA (28S, 5.8S and 5S). Citrullinated by PADI4. Post-translationally, ufmylated by UFL1.

It localises to the cytoplasm. Component of the large ribosomal subunit. Plays a role in the formation of actively translating ribosomes. May play a role in the embryonic brain development. The polypeptide is Large ribosomal subunit protein uL16 (Homo sapiens (Human)).